The chain runs to 165 residues: Protein SprT (165 aa).

In terms of domain architecture, SprT-like spans 20-163 (ENLAQANLKL…RCVHCGEPLV (144 aa)). Position 78 (His-78) interacts with Zn(2+). The active site involves Glu-79. Zn(2+) is bound at residue His-82.

This sequence belongs to the SprT family. Zn(2+) is required as a cofactor.

The protein localises to the cytoplasm. In Salmonella arizonae (strain ATCC BAA-731 / CDC346-86 / RSK2980), this protein is Protein SprT.